Consider the following 151-residue polypeptide: Large ribosomal subunit protein uL15 (151 aa).

It belongs to the universal ribosomal protein uL15 family. As to quaternary structure, part of the 50S ribosomal subunit.

Functionally, binds to the 23S rRNA. The sequence is that of Large ribosomal subunit protein uL15 from Hyperthermus butylicus (strain DSM 5456 / JCM 9403 / PLM1-5).